The sequence spans 106 residues: Small ribosomal subunit protein bS16 (106 aa).

It belongs to the bacterial ribosomal protein bS16 family.

This Protochlamydia amoebophila (strain UWE25) protein is Small ribosomal subunit protein bS16.